Reading from the N-terminus, the 626-residue chain is Janus kinase and microtubule-interacting protein 1 (626 aa).

Residues 1–25 are disordered; sequence MSKKGRSKGEKPETETDSVQMANEE. Positions 1-365 are mediates association with microtubules; that stretch reads MSKKGRSKGE…KLKSLTRENV (365 aa). 2 coiled-coil regions span residues 13 to 255 and 284 to 413; these read ETET…EAER and ERDV…DDLS. Positions 365 to 626 are mediates interaction with TYK2 and GABBR1; the sequence is VEMKEKLSAQ…ILFEPKLKFV (262 aa). At Ser-382 the chain carries Phosphoserine. Residues 452–461 are compositionally biased toward polar residues; the sequence is ETLSETSYNT. The segment at 452–481 is disordered; it reads ETLSETSYNTDRTDRTPATPEEDLDETTTR. Thr-470 bears the Phosphothreonine mark. Residues 490–604 are a coiled coil; the sequence is QLTREYQALQ…EFRVLELEVR (115 aa).

This sequence belongs to the JAKMIP family. As to quaternary structure, homodimer. Interacts with JAK1 and TYK2. Forms a complex with GABBR1 and KIF5B/kinesin-1. In terms of processing, phosphorylated. In terms of tissue distribution, specifically expressed in brain and testis by spermatogonia, spermatocytes, spermatozoa and Sertoli cells (at protein level).

The protein localises to the cytoplasm. Its subcellular location is the cytoskeleton. It is found in the membrane. Its function is as follows. Associates with microtubules and may play a role in the microtubule-dependent transport of the GABA-B receptor. May play a role in JAK1 signaling and regulate microtubule cytoskeleton rearrangements. In Rattus norvegicus (Rat), this protein is Janus kinase and microtubule-interacting protein 1 (Jakmip1).